The chain runs to 94 residues: Cell division protein FtsB (94 aa).

Residues 1–3 (MRV) are Cytoplasmic-facing. Residues 4–21 (FALTLSLLLVWLLYTLMW) traverse the membrane as a helical segment. The Periplasmic portion of the chain corresponds to 22–94 (GKNGVMDFRA…YRIIGEESRQ (73 aa)). Positions 33-76 (QAEIEVQQQVNANLHLRNQEMFAEIDDLRQGLDAIEERARNELG) form a coiled coil.

It belongs to the FtsB family. Part of a complex composed of FtsB, FtsL and FtsQ.

It localises to the cell inner membrane. Essential cell division protein. May link together the upstream cell division proteins, which are predominantly cytoplasmic, with the downstream cell division proteins, which are predominantly periplasmic. The chain is Cell division protein FtsB from Vibrio cholerae serotype O1 (strain ATCC 39315 / El Tor Inaba N16961).